Consider the following 506-residue polypeptide: MEQKPSKVECGSDPEENSARSPDGKRKRKNGQCSLKTSMSGYIPSYLDKDEQCVVCGDKATGYHYRCITCEGCKGFFRRTIQKNLHPTYSCKYDSCCVIDKITRNQCQLCRFKKCIAVGMAMDLVLDDSKRVAKRKLIEQNRERRRKEEMIRSLQQRPEPTPEEWDLIHVATEAHRSTNAQGSHWKQRRKFLPDDIGQSPIVSMPDGDKVDLEAFSEFTKIITPAITRVVDFAKKLPMFSELPCEDQIILLKGCCMEIMSLRAAVRYDPESDTLTLSGEMAVKREQLKNGGLGVVSDAIFELGKSLSAFNLDDTEVALLQAVLLMSTDRSGLLCVDKIEKSQEAYLLAFEHYVNHRKHNIPHFWPKLLMKEREVQSSILYKGAAAEGRPGGSLGVHPEGQQLLGMHVVQGPQVRQLEQQLGEAGSLRGPVLQHQSPKSPQQRLLELLHRSGILHARAVCGEDDSSEAGSLTSSDEDPEVCEDAAQATQPLPEAPPRADGEGGGGGS.

Residues 1 to 32 form a disordered region; the sequence is MEQKPSKVECGSDPEENSARSPDGKRKRKNGQ. A modulating region spans residues 1-52; sequence MEQKPSKVECGSDPEENSARSPDGKRKRKNGQCSLKTSMSGYIPSYLDKDEQ. 8 residues coordinate Zn(2+): Cys-53, Cys-56, Cys-70, Cys-73, Cys-91, Cys-97, Cys-107, and Cys-110. 2 consecutive NR C4-type zinc fingers follow at residues 53–73 and 91–115; these read CVVCGDKATGYHYRCITCEGC and CKYDSCCVIDKITRNQCQLCRFKKC. A DNA-binding region (nuclear receptor) is located at residues 53 to 127; sequence CVVCGDKATG…VGMAMDLVLD (75 aa). An NR LBD domain is found at 163 to 407; that stretch reads EEWDLIHVAT…EGQQLLGMHV (245 aa). Residues Arg-228 and Ser-277 each coordinate 3,3',5-triiodo-L-thyronine. Residues 460 to 506 form a disordered region; it reads GEDDSSEAGSLTSSDEDPEVCEDAAQATQPLPEAPPRADGEGGGGGS.

It belongs to the nuclear hormone receptor family. NR1 subfamily. As to quaternary structure, binds DNA as a dimer; homodimer and heterodimer with RXRB. Interacts with NCOA3 and NCOA6 coactivators, leading to a strong increase of transcription of target genes. Probably interacts with SFPQ. Interacts with C1D. Interacts with AKAP13. Interacts with TP53INP2. Interacts with PER2. Interacts with PER2. Isoform alpha-2 and isoform alpha-1 interact with TACC1, but the interaction with alpha-1 is weaker. The interaction with isoform alpha-1, but not alpha-2, is decreased in the presence of thyroid hormone T3.

The protein resides in the nucleus. It localises to the cytoplasm. Functionally, nuclear hormone receptor that can act as a repressor or activator of transcription. High affinity receptor for thyroid hormones, including triiodothyronine and thyroxine. In Sus scrofa (Pig), this protein is Thyroid hormone receptor alpha (THRA).